The following is a 380-amino-acid chain: 3-dehydroquinate synthase (380 aa).

Residues 100–104 (GAASD), 124–125 (TT), Lys-137, and Lys-146 each bind NAD(+). Residues Glu-179, His-251, and His-267 each contribute to the Zn(2+) site. The segment at 320–343 (YMQRDKKNMQSNDTDSDKDSREMP) is disordered.

This sequence belongs to the sugar phosphate cyclases superfamily. Dehydroquinate synthase family. Requires NAD(+) as cofactor. Co(2+) serves as cofactor. The cofactor is Zn(2+).

The protein resides in the cytoplasm. It carries out the reaction 7-phospho-2-dehydro-3-deoxy-D-arabino-heptonate = 3-dehydroquinate + phosphate. The protein operates within metabolic intermediate biosynthesis; chorismate biosynthesis; chorismate from D-erythrose 4-phosphate and phosphoenolpyruvate: step 2/7. Its function is as follows. Catalyzes the conversion of 3-deoxy-D-arabino-heptulosonate 7-phosphate (DAHP) to dehydroquinate (DHQ). In Tropheryma whipplei (strain Twist) (Whipple's bacillus), this protein is 3-dehydroquinate synthase.